A 54-amino-acid chain; its full sequence is UPF0391 membrane protein Rfer_1875 (54 aa).

Helical transmembrane passes span 5-25 (AVVF…GIAA) and 30-50 (IGKI…LFGL).

Belongs to the UPF0391 family.

It localises to the cell membrane. The sequence is that of UPF0391 membrane protein Rfer_1875 from Albidiferax ferrireducens (strain ATCC BAA-621 / DSM 15236 / T118) (Rhodoferax ferrireducens).